Consider the following 191-residue polypeptide: MGLLSIIRKQKLRDKEIRCLILGLDNSGKSTIVNKLLPKDEQNNDGIMPTVGFQIHSLMIKDVTISLWDIGGQRTLRPFWDNYFDKTQAMIWCIDVSLSMRFDETLQELKELINRDENRIGYECAVIVVLNKIDLVEDKSELHRRCLLVESELKCLFKPDIRIELVKCSGVTGEGIDNLRDRLVESCHFTQ.

Residues 23–30, 69–73, and 131–134 each bind GTP; these read GLDNSGKS, DIGGQ, and NKID.

Functionally, implicated in yeast microtubule function. The polypeptide is GTP-binding protein CIN4 (CIN4) (Saccharomyces cerevisiae (strain ATCC 204508 / S288c) (Baker's yeast)).